A 360-amino-acid polypeptide reads, in one-letter code: Homeobox protein ceh-60 (360 aa).

The tract at residues 1–82 is PBC-A; that stretch reads MDNLIKQLQM…ENPTFPLEEV (82 aa). One can recognise a PBC domain in the interval 1–179; the sequence is MDNLIKQLQM…ILVLRREIEQ (179 aa). The interval 85-179 is PBC-B; the sequence is EKDEEWQPLE…ILVLRREIEQ (95 aa). A DNA-binding region (homeobox) is located at residues 180–242; it reads QGRKRRNFDK…NQRIRTKQQA (63 aa).

This sequence belongs to the TALE/PBX homeobox family. Forms a heterodimer with homeobox unc-62. Interacts with pqm-1.

The protein resides in the nucleus. Functionally, probable transcription regulator which binds to DNA, repressing genes involved in longevity and stress, while activating genes involved in reproduction, such as the vitellogenins. Associates with homeobox unc-62 to regulate gene expression, including repression of genes involved in innate immunity. Required for intestinal expression of vitellogenin genes. Negatively modulates longevity, probably independently of effects on vitellogenesis. Involved in lipid homeostasis, contributing to the reallocation of intestinal lipids to the germline and to the formation of the cuticle. Associates with transcriptional regulator pqm-1 at the daf-16 associated element within the promoters of stress-responsive genes to regulate expression. In Caenorhabditis elegans, this protein is Homeobox protein ceh-60.